A 414-amino-acid chain; its full sequence is Phosphoglycerate kinase (414 aa).

Residues 20–22 (DIN), arginine 37, 60–63 (HQSR), arginine 117, and arginine 164 each bind substrate. ATP-binding positions include glutamate 338 and 364-367 (GGHL).

It belongs to the phosphoglycerate kinase family. In terms of assembly, monomer.

Its subcellular location is the cytoplasm. The catalysed reaction is (2R)-3-phosphoglycerate + ATP = (2R)-3-phospho-glyceroyl phosphate + ADP. Its pathway is carbohydrate degradation; glycolysis; pyruvate from D-glyceraldehyde 3-phosphate: step 2/5. In Methanococcus maripaludis (strain DSM 14266 / JCM 13030 / NBRC 101832 / S2 / LL), this protein is Phosphoglycerate kinase.